The sequence spans 150 residues: MLGAALRRCAVAAAARAGPRGLLHSAPTPGPAAAIQSVRCYSHGSSETDEEFDARWVTYFNKPDIDAWELRKGINTLVTYDLVPEPKIIDAALRACRRLNDFASTVRILEAVKDKAGPHKEIYPYVIQELRPTLNELGISTPEELGLDKV.

The N-terminal 41 residues, 1 to 41 (MLGAALRRCAVAAAARAGPRGLLHSAPTPGPAAAIQSVRCY), are a transit peptide targeting the mitochondrion. Residues 2-17 (LGAALRRCAVAAAARA) carry the SIFI-degron motif. An N6-acetyllysine mark is found at lysine 87 and lysine 113. At threonine 141 the chain carries Phosphothreonine.

This sequence belongs to the cytochrome c oxidase subunit 5A family. Component of the cytochrome c oxidase (complex IV, CIV), a multisubunit enzyme composed of 14 subunits. The complex is composed of a catalytic core of 3 subunits MT-CO1, MT-CO2 and MT-CO3, encoded in the mitochondrial DNA, and 11 supernumerary subunits COX4I, COX5A, COX5B, COX6A, COX6B, COX6C, COX7A, COX7B, COX7C, COX8 and NDUFA4, which are encoded in the nuclear genome. The complex exists as a monomer or a dimer and forms supercomplexes (SCs) in the inner mitochondrial membrane with NADH-ubiquinone oxidoreductase (complex I, CI) and ubiquinol-cytochrome c oxidoreductase (cytochrome b-c1 complex, complex III, CIII), resulting in different assemblies (supercomplex SCI(1)III(2)IV(1) and megacomplex MCI(2)III(2)IV(2)). Interacts with AFG1L. Interacts with RAB5IF. In response to mitochondrial stress, the precursor protein is ubiquitinated by the SIFI complex in the cytoplasm before mitochondrial import, leading to its degradation. Within the SIFI complex, UBR4 initiates ubiquitin chain that are further elongated or branched by KCMF1.

The protein resides in the mitochondrion inner membrane. It functions in the pathway energy metabolism; oxidative phosphorylation. Functionally, component of the cytochrome c oxidase, the last enzyme in the mitochondrial electron transport chain which drives oxidative phosphorylation. The respiratory chain contains 3 multisubunit complexes succinate dehydrogenase (complex II, CII), ubiquinol-cytochrome c oxidoreductase (cytochrome b-c1 complex, complex III, CIII) and cytochrome c oxidase (complex IV, CIV), that cooperate to transfer electrons derived from NADH and succinate to molecular oxygen, creating an electrochemical gradient over the inner membrane that drives transmembrane transport and the ATP synthase. Cytochrome c oxidase is the component of the respiratory chain that catalyzes the reduction of oxygen to water. Electrons originating from reduced cytochrome c in the intermembrane space (IMS) are transferred via the dinuclear copper A center (CU(A)) of subunit 2 and heme A of subunit 1 to the active site in subunit 1, a binuclear center (BNC) formed by heme A3 and copper B (CU(B)). The BNC reduces molecular oxygen to 2 water molecules using 4 electrons from cytochrome c in the IMS and 4 protons from the mitochondrial matrix. The polypeptide is Cytochrome c oxidase subunit 5A, mitochondrial (COX5A) (Plecturocebus donacophilus (Bolivian gray titi monkey)).